Reading from the N-terminus, the 156-residue chain is Small ribosomal subunit protein uS7 (156 aa).

Belongs to the universal ribosomal protein uS7 family. In terms of assembly, part of the 30S ribosomal subunit. Contacts proteins S9 and S11.

In terms of biological role, one of the primary rRNA binding proteins, it binds directly to 16S rRNA where it nucleates assembly of the head domain of the 30S subunit. Is located at the subunit interface close to the decoding center, probably blocks exit of the E-site tRNA. The protein is Small ribosomal subunit protein uS7 of Pelotomaculum thermopropionicum (strain DSM 13744 / JCM 10971 / SI).